Consider the following 126-residue polypeptide: Large ribosomal subunit protein bL17 (126 aa).

This sequence belongs to the bacterial ribosomal protein bL17 family. In terms of assembly, part of the 50S ribosomal subunit. Contacts protein L32.

This Limosilactobacillus fermentum (strain NBRC 3956 / LMG 18251) (Lactobacillus fermentum) protein is Large ribosomal subunit protein bL17.